Reading from the N-terminus, the 645-residue chain is Acetyl-coenzyme A synthetase (645 aa).

Residues 190–193 (RGGK) and T308 contribute to the CoA site. Residues 384-386 (GEP), 408-413 (DTWWQT), D497, and R512 contribute to the ATP site. S520 contributes to the CoA binding site. R523 lines the ATP pocket. Residues V534, H536, and I539 each contribute to the Mg(2+) site. The residue at position 606 (K606) is an N6-acetyllysine.

The protein belongs to the ATP-dependent AMP-binding enzyme family. Requires Mg(2+) as cofactor. Post-translationally, acetylated. Deacetylation by the SIR2-homolog deacetylase activates the enzyme.

The catalysed reaction is acetate + ATP + CoA = acetyl-CoA + AMP + diphosphate. Functionally, catalyzes the conversion of acetate into acetyl-CoA (AcCoA), an essential intermediate at the junction of anabolic and catabolic pathways. AcsA undergoes a two-step reaction. In the first half reaction, AcsA combines acetate with ATP to form acetyl-adenylate (AcAMP) intermediate. In the second half reaction, it can then transfer the acetyl group from AcAMP to the sulfhydryl group of CoA, forming the product AcCoA. The sequence is that of Acetyl-coenzyme A synthetase from Alcanivorax borkumensis (strain ATCC 700651 / DSM 11573 / NCIMB 13689 / SK2).